A 341-amino-acid polypeptide reads, in one-letter code: UDP-3-O-(3-hydroxymyristoyl)glucosamine N-acyltransferase (341 aa).

His-239 (proton acceptor) is an active-site residue.

Belongs to the transferase hexapeptide repeat family. LpxD subfamily. Homotrimer.

It catalyses the reaction a UDP-3-O-[(3R)-3-hydroxyacyl]-alpha-D-glucosamine + a (3R)-hydroxyacyl-[ACP] = a UDP-2-N,3-O-bis[(3R)-3-hydroxyacyl]-alpha-D-glucosamine + holo-[ACP] + H(+). It carries out the reaction UDP-3-O-[(3R)-3-hydroxytetradecanoyl]-alpha-D-glucosamine + (3R)-hydroxytetradecanoyl-[ACP] = UDP-2-N,3-O-bis[(3R)-3-hydroxytetradecanoyl]-alpha-D-glucosamine + holo-[ACP] + H(+). The protein operates within glycolipid biosynthesis; lipid IV(A) biosynthesis; lipid IV(A) from (3R)-3-hydroxytetradecanoyl-[acyl-carrier-protein] and UDP-N-acetyl-alpha-D-glucosamine: step 3/6. Catalyzes the N-acylation of UDP-3-O-(hydroxytetradecanoyl)glucosamine using 3-hydroxytetradecanoyl-ACP as the acyl donor. Is involved in the biosynthesis of lipid A, a phosphorylated glycolipid that anchors the lipopolysaccharide to the outer membrane of the cell. The sequence is that of UDP-3-O-(3-hydroxymyristoyl)glucosamine N-acyltransferase from Shigella dysenteriae serotype 1 (strain Sd197).